A 206-amino-acid polypeptide reads, in one-letter code: GTP cyclohydrolase 1 (206 aa).

3 residues coordinate Zn(2+): Cys97, His100, and Cys168.

This sequence belongs to the GTP cyclohydrolase I family. Toroid-shaped homodecamer, composed of two pentamers of five dimers.

The enzyme catalyses GTP + H2O = 7,8-dihydroneopterin 3'-triphosphate + formate + H(+). Its pathway is cofactor biosynthesis; 7,8-dihydroneopterin triphosphate biosynthesis; 7,8-dihydroneopterin triphosphate from GTP: step 1/1. This chain is GTP cyclohydrolase 1, found in Chromobacterium violaceum (strain ATCC 12472 / DSM 30191 / JCM 1249 / CCUG 213 / NBRC 12614 / NCIMB 9131 / NCTC 9757 / MK).